The chain runs to 444 residues: MLILVVGLNHRTAPVEVREKLSFSAKSLQGALAQLKSYPVIEGCAILSTCNRTEIYAATLEMDDGLNAIWDFLSRWSGVGISEIKNFTYSHTLYDTIRHLFRVAAGLDSMILGETQILGQVREAYQRAIEYESTNRVLNTLFQQAITVGKRVRTETGIDRNAVSISYAAVELARQHLGSLDGRSVLVIGAGKMSELTARHLVANGVSSVIVSNRSFERAVALAEQFRGRAVRFDELYRCMEAADIVISCTAASHCVVKAEEVSRVMDKRRGRAIFMVDIAVPRDIEAEVGNLAGVTLFDIDDLKNVIDQNLAERKQAAVKAEEIIEEELDGFMKWLGMQFVVPTISALKKWGDEIKQKELCRALNRLGNISEHDRKVICSMANSIVNQILHVPVAQLKSYALTTEGHLYTEILQNLFNLDVPGQKPKKQPAPAGIKEPVLAKKG.

Substrate is bound by residues 49-52 (TCNR), serine 109, 114-116 (ETQ), and glutamine 120. The Nucleophile role is filled by cysteine 50. 189-194 (GAGKMS) lines the NADP(+) pocket. A disordered region spans residues 425–444 (KPKKQPAPAGIKEPVLAKKG).

The protein belongs to the glutamyl-tRNA reductase family. Homodimer.

It carries out the reaction (S)-4-amino-5-oxopentanoate + tRNA(Glu) + NADP(+) = L-glutamyl-tRNA(Glu) + NADPH + H(+). Its pathway is porphyrin-containing compound metabolism; protoporphyrin-IX biosynthesis; 5-aminolevulinate from L-glutamyl-tRNA(Glu): step 1/2. Functionally, catalyzes the NADPH-dependent reduction of glutamyl-tRNA(Glu) to glutamate 1-semialdehyde (GSA). This is Glutamyl-tRNA reductase from Pelotomaculum thermopropionicum (strain DSM 13744 / JCM 10971 / SI).